A 207-amino-acid polypeptide reads, in one-letter code: Ribosomal RNA large subunit methyltransferase E (207 aa).

S-adenosyl-L-methionine is bound by residues Gly60, Trp62, Asp80, Asp96, and Asp121. Residue Lys161 is the Proton acceptor of the active site.

It belongs to the class I-like SAM-binding methyltransferase superfamily. RNA methyltransferase RlmE family.

Its subcellular location is the cytoplasm. The enzyme catalyses uridine(2552) in 23S rRNA + S-adenosyl-L-methionine = 2'-O-methyluridine(2552) in 23S rRNA + S-adenosyl-L-homocysteine + H(+). In terms of biological role, specifically methylates the uridine in position 2552 of 23S rRNA at the 2'-O position of the ribose in the fully assembled 50S ribosomal subunit. This chain is Ribosomal RNA large subunit methyltransferase E, found in Thioalkalivibrio sulfidiphilus (strain HL-EbGR7).